Reading from the N-terminus, the 260-residue chain is MIVLKWLFFTISPCDAAEPWQLGFQDAATPIMQGIIDLHHDIFFFLILILVFVLWILVRALWHFHYKKNAIPQRIVHGTTIEILWTIFPSIILMFIAIPSFALLYSMDEVVVDPAITIKAIGHQWYWTYEYSDYNSSDEQSLTFDSYMIPEEDLELGQLRLLEVDNRVVVPAKTHLRIIVTSADVLHSWAVPSLGVKCDAVPGRLNQISILVQREGVYYGQCSEICGTNHAFMPIVVEAVSRKDYGSWVSNQLIPQTGEA.

Residues 1–41 (MIVLKWLFFTISPCDAAEPWQLGFQDAATPIMQGIIDLHHD) lie on the Mitochondrial intermembrane side of the membrane. Residues 42-62 (IFFFLILILVFVLWILVRALW) traverse the membrane as a helical segment. At 63 to 86 (HFHYKKNAIPQRIVHGTTIEILWT) the chain is on the mitochondrial matrix side. A helical membrane pass occupies residues 87–107 (IFPSIILMFIAIPSFALLYSM). At 108–260 (DEVVVDPAIT…NQLIPQTGEA (153 aa)) the chain is on the mitochondrial intermembrane side. Residues H187, C222, E224, C226, H230, and M233 each contribute to the Cu cation site. Residue E224 coordinates Mg(2+).

It belongs to the cytochrome c oxidase subunit 2 family. In terms of assembly, component of the cytochrome c oxidase (complex IV, CIV), a multisubunit enzyme composed of a catalytic core of 3 subunits and several supernumerary subunits. The complex exists as a monomer or a dimer and forms supercomplexes (SCs) in the inner mitochondrial membrane with ubiquinol-cytochrome c oxidoreductase (cytochrome b-c1 complex, complex III, CIII). It depends on Cu cation as a cofactor.

The protein resides in the mitochondrion inner membrane. It carries out the reaction 4 Fe(II)-[cytochrome c] + O2 + 8 H(+)(in) = 4 Fe(III)-[cytochrome c] + 2 H2O + 4 H(+)(out). In terms of biological role, component of the cytochrome c oxidase, the last enzyme in the mitochondrial electron transport chain which drives oxidative phosphorylation. The respiratory chain contains 3 multisubunit complexes succinate dehydrogenase (complex II, CII), ubiquinol-cytochrome c oxidoreductase (cytochrome b-c1 complex, complex III, CIII) and cytochrome c oxidase (complex IV, CIV), that cooperate to transfer electrons derived from NADH and succinate to molecular oxygen, creating an electrochemical gradient over the inner membrane that drives transmembrane transport and the ATP synthase. Cytochrome c oxidase is the component of the respiratory chain that catalyzes the reduction of oxygen to water. Electrons originating from reduced cytochrome c in the intermembrane space (IMS) are transferred via the dinuclear copper A center (CU(A)) of subunit 2 and heme A of subunit 1 to the active site in subunit 1, a binuclear center (BNC) formed by heme A3 and copper B (CU(B)). The BNC reduces molecular oxygen to 2 water molecules using 4 electrons from cytochrome c in the IMS and 4 protons from the mitochondrial matrix. This chain is Cytochrome c oxidase subunit 2 (COX2), found in Arabidopsis thaliana (Mouse-ear cress).